The primary structure comprises 447 residues: Argininosuccinate synthase (447 aa).

ATP contacts are provided by residues 17-25 (AFSGGLDTS) and alanine 43. Tyrosine 99 serves as a coordination point for L-citrulline. ATP contacts are provided by glycine 129 and threonine 131. Positions 131, 135, and 136 each coordinate L-aspartate. L-citrulline is bound at residue asparagine 135. ATP is bound at residue aspartate 136. L-citrulline contacts are provided by arginine 139 and serine 192. ATP is bound at residue aspartate 194. 3 residues coordinate L-citrulline: threonine 201, glutamate 203, and glutamate 280.

The protein belongs to the argininosuccinate synthase family. Type 2 subfamily. Homotetramer.

The protein localises to the cytoplasm. It catalyses the reaction L-citrulline + L-aspartate + ATP = 2-(N(omega)-L-arginino)succinate + AMP + diphosphate + H(+). It functions in the pathway amino-acid biosynthesis; L-arginine biosynthesis; L-arginine from L-ornithine and carbamoyl phosphate: step 2/3. This chain is Argininosuccinate synthase (argG), found in Escherichia coli O157:H7.